Reading from the N-terminus, the 216-residue chain is 3-isopropylmalate dehydratase small subunit (216 aa).

It belongs to the LeuD family. LeuD type 1 subfamily. As to quaternary structure, heterodimer of LeuC and LeuD.

The catalysed reaction is (2R,3S)-3-isopropylmalate = (2S)-2-isopropylmalate. Its pathway is amino-acid biosynthesis; L-leucine biosynthesis; L-leucine from 3-methyl-2-oxobutanoate: step 2/4. Functionally, catalyzes the isomerization between 2-isopropylmalate and 3-isopropylmalate, via the formation of 2-isopropylmaleate. This is 3-isopropylmalate dehydratase small subunit from Burkholderia thailandensis (strain ATCC 700388 / DSM 13276 / CCUG 48851 / CIP 106301 / E264).